The following is a 72-amino-acid chain: Translation initiation factor IF-1 (72 aa).

In terms of domain architecture, S1-like spans M1–K72.

Belongs to the IF-1 family. In terms of assembly, component of the 30S ribosomal translation pre-initiation complex which assembles on the 30S ribosome in the order IF-2 and IF-3, IF-1 and N-formylmethionyl-tRNA(fMet); mRNA recruitment can occur at any time during PIC assembly.

The protein resides in the cytoplasm. One of the essential components for the initiation of protein synthesis. Stabilizes the binding of IF-2 and IF-3 on the 30S subunit to which N-formylmethionyl-tRNA(fMet) subsequently binds. Helps modulate mRNA selection, yielding the 30S pre-initiation complex (PIC). Upon addition of the 50S ribosomal subunit IF-1, IF-2 and IF-3 are released leaving the mature 70S translation initiation complex. The protein is Translation initiation factor IF-1 of Streptococcus gordonii (strain Challis / ATCC 35105 / BCRC 15272 / CH1 / DL1 / V288).